Reading from the N-terminus, the 349-residue chain is Core protein VP7 (349 aa).

N-linked (GlcNAc...) asparagine; by host glycosylation is found at N193 and N287.

This sequence belongs to the orbivirus VP7 family. Homotrimer that assemble in a complex of 260 capsomers on an inner scaffold composed of VP3.

It localises to the virion. In terms of biological role, the VP7 protein is one of the five proteins (with VP1, VP3, VP4, and VP6) which form the inner capsid of the virus. The protein is Core protein VP7 (Segment-7) of Antilocapra americana (Pronghorn).